A 447-amino-acid chain; its full sequence is N-succinylarginine dihydrolase (447 aa).

Residues 19–28, asparagine 110, and 137–138 each bind substrate; these read AGLSFGNEAS and HR. Glutamate 174 is a catalytic residue. Arginine 212 is a substrate binding site. Histidine 248 is an active-site residue. Substrate-binding residues include aspartate 250 and asparagine 359. Catalysis depends on cysteine 365, which acts as the Nucleophile.

It belongs to the succinylarginine dihydrolase family. In terms of assembly, homodimer.

The enzyme catalyses N(2)-succinyl-L-arginine + 2 H2O + 2 H(+) = N(2)-succinyl-L-ornithine + 2 NH4(+) + CO2. It functions in the pathway amino-acid degradation; L-arginine degradation via AST pathway; L-glutamate and succinate from L-arginine: step 2/5. Its function is as follows. Catalyzes the hydrolysis of N(2)-succinylarginine into N(2)-succinylornithine, ammonia and CO(2). This chain is N-succinylarginine dihydrolase, found in Escherichia coli O7:K1 (strain IAI39 / ExPEC).